The primary structure comprises 521 residues: MALMILPFIGALSVSESLVALVTVCLVYLIIKSFQANIPEGLSRLPGPKPLPIIGNVLEVGSRPYLSLTEMSKRYGNVFQIQIGMRPVVVLSGNETVRQALIKQGDEFAGRPDLYSFRFISEGKSLAFSTDQAGVWRARRKLAYSALRSFSTLEGTTPEYSCVLEEHISKEAEYLIKQLDTVMKADGSFDPFRYIVVSVANVICGMCFGRRYDHHDRELLSLVNLSDEFGQVVGSGNPADFIPILQYLPNKTMKKFVNINDRFISFVQKIVSEHYATFNKDNIRDITDSLIDHCEDRKLDENANVQMSDEKVVGIVNDLFGAGLDTISTALSWSVMYLVAYPEIQERLYQELKENVGLDRTPVLSDRNNLPLLEAFILEIFRHSSFLPFTIPHCTTKDTSLNGYYIPKDTCVFINQWQINHDPELWKEPSSFNPDRFLSADGTEVNKVDGEKVMVFGLGKRRCIGEVIARNEVYMFLAILIQKLHFYNLPGEPLDMTPEYGLTMKHKRCHLRATVRVRSDH.

Residue phenylalanine 229 coordinates substrate. Cysteine 463 contributes to the heme binding site.

It belongs to the cytochrome P450 family. The cofactor is heme.

It localises to the endoplasmic reticulum membrane. Its subcellular location is the microsome membrane. The enzyme catalyses an organic molecule + reduced [NADPH--hemoprotein reductase] + O2 = an alcohol + oxidized [NADPH--hemoprotein reductase] + H2O + H(+). In terms of biological role, cytochromes P450 are a group of heme-thiolate monooxygenases. They oxidize a variety of structurally unrelated compounds, including steroids, fatty acids, and xenobiotics. This chain is Cytochrome P450 1A1 (cyp1a1), found in Chelon auratus (Golden grey mullet).